A 711-amino-acid polypeptide reads, in one-letter code: Cyclomaltodextrin glucanotransferase (711 aa).

Positions 1–31 (MRRWLSLVLSMSFVFSAIFIVSDTQKVTVEA) are cleaved as a signal peptide. An A1 region spans residues 32-165 (AGNLNKVNFT…GIKVIIDFAP (134 aa)). Residues D55, N57, N60, and N61 each coordinate Ca(2+). A disulfide bridge links C71 with C78. G79 and D81 together coordinate Ca(2+). Substrate is bound at residue 127–128 (YW). N166 lines the Ca(2+) pocket. The tract at residues 166-229 (NHTSPASETN…NLFDLADLNH (64 aa)) is b. Position 167 (H167) interacts with substrate. Position 217 (I217) interacts with Ca(2+). 220 to 223 (NLFD) contacts substrate. D226 lines the Ca(2+) pocket. Residues 230-433 (QNPVIDRYLK…LRRNNPALAY (204 aa)) are A2. Residue R254 participates in substrate binding. Residue D256 is the Nucleophile of the active site. 259–260 (KH) is a substrate binding site. H260 is a binding site for Ca(2+). The active-site Proton donor is E284. Positions 354, 398, and 402 each coordinate substrate. The c stretch occupies residues 434 to 522 (GDTEQRWING…EVGVWAYSAT (89 aa)). Residues 523 to 606 (ESTPIIGHVG…SAAYDNFEVL (84 aa)) are d. The IPT/TIG domain occupies 526–604 (PIIGHVGPMM…QTSAAYDNFE (79 aa)). Positions 605–711 (VLTNDQVSVR…TGKIIVDWQN (107 aa)) constitute a CBM20 domain. The e stretch occupies residues 607 to 711 (TNDQVSVRFV…TGKIIVDWQN (105 aa)).

It belongs to the glycosyl hydrolase 13 family. In terms of assembly, monomer. Requires Ca(2+) as cofactor.

The protein resides in the secreted. It carries out the reaction Cyclizes part of a (1-&gt;4)-alpha-D-glucan chain by formation of a (1-&gt;4)-alpha-D-glucosidic bond.. This Geobacillus stearothermophilus (Bacillus stearothermophilus) protein is Cyclomaltodextrin glucanotransferase (cgt).